The following is a 988-amino-acid chain: Voltage-gated delayed rectifier potassium channel KCNH5 (988 aa).

The Cytoplasmic segment spans residues 1-217 (MPGGKRGLVA…LHYCAFKTTW (217 aa)). The PAS domain occupies 14-86 (TFLENIVRRS…TIEKVRQTFD (73 aa)). The PAC domain occupies 91–143 (NCFEVLLYKKNRTPVWFYMQIAPIRNEHEKVVLFLCTFKDITLFKQPIEDDST). Residues 218–238 (DWVILILTFYTAIMVPYNVSF) traverse the membrane as a helical segment. At 239–243 (KTKQN) the chain is on the extracellular side. Residues 244–264 (NIAWLVLDSVVDVIFLVDIVL) traverse the membrane as a helical segment. The Cytoplasmic segment spans residues 265–291 (NFHTTFVGPGGEVISDPKLIRMNYLKT). The helical transmembrane segment at 292–312 (WFVIDLLSCLPYDIINAFENV) threads the bilayer. The Extracellular segment spans residues 313 to 319 (DEGISSL). The chain crosses the membrane as a helical; Voltage-sensor span at residues 320 to 340 (FSSLKVVRLLRLGRVARKLDH). Topologically, residues 341–346 (YLEYGA) are cytoplasmic. A helical membrane pass occupies residues 347-367 (AVLVLLVCVFGLVAHWLACIW). Over 368–419 (YSIGDYEVIDEVTNTIQIDSWLYQLALSIGTPYRYNTSAGIWEGGPSKDSLY) the chain is Extracellular. Asparagine 403 carries an N-linked (GlcNAc...) asparagine glycan. The pore-forming intramembrane region spans 420-440 (VSSLYFTMTSLTTIGFGNIAP). Positions 432–437 (TIGFGN) match the Selectivity filter motif. Over 441–446 (TTDVEK) the chain is Extracellular. The chain crosses the membrane as a helical span at residues 447-467 (MFSVAMMMVGSLLYATIFGNV). At 468–988 (TTIFQQMYAN…PESDKDEINF (521 aa)) the chain is on the cytoplasmic side. 550-668 (AFRLASDGCL…SFSRNLTLTC (119 aa)) contributes to the a nucleoside 3',5'-cyclic phosphate binding site. The segment at 704 to 715 (HPVRKLFQKFKQ) is calmodulin-binding. A disordered region spans residues 721 to 741 (IQGSAQSDPERSQLQVESRPL). Polar residues predominate over residues 723 to 741 (GSAQSDPERSQLQVESRPL). Lysine 785 is covalently cross-linked (Glycyl lysine isopeptide (Lys-Gly) (interchain with G-Cter in ubiquitin)). A disordered region spans residues 838-893 (GLLSEDPKGSDSENSVTKNPLRKTDSCDSGITKSDLRLDKAGEARSPLEHSPSQAD). Basic and acidic residues predominate over residues 871–885 (SDLRLDKAGEARSPL). Residue serine 883 is modified to Phosphoserine. Positions 909-948 (TLQEVKHELKEDIQLLSCRMTALEKQVAEILKLLSEKSVP) are CAD (involved in subunit assembly).

Belongs to the potassium channel family. H (Eag) (TC 1.A.1.20) subfamily. Kv10.2/KCNH5 sub-subfamily. Homotetramer. The potassium channel is probably composed of a homo- or heterotetrameric complex of pore-forming alpha subunits that can associate with modulating beta subunits. Heteromultimer with KCNH1/EAG.

It localises to the membrane. It carries out the reaction K(+)(in) = K(+)(out). Its function is as follows. Pore-forming (alpha) subunit of a voltage-gated delayed rectifier potassium channel that mediates outward-rectifying potassium currents which, on depolarization, reaches a steady-state level and do not inactivate. The kinetic is characterized by a slow activation time course and a small voltage dependence of the activation time constants, therefore, starts to open at more negative voltages. The activation kinetics depend on the prepulse potential and external divalent cation concentration. The time course of activation is biphasic with a fast and a slowly activating current component. With negative prepulses, the current activation is delayed and slowed down several fold, whereas more positive prepulses speed up activation, therefore the activation rate depends on holding potential. The chain is Voltage-gated delayed rectifier potassium channel KCNH5 from Mus musculus (Mouse).